Here is a 189-residue protein sequence, read N- to C-terminus: CASP-like protein 1F2 (189 aa).

The Cytoplasmic portion of the chain corresponds to 1 to 27; it reads MESLEVANGKSSALGVSREASSPPQMG. A helical transmembrane segment spans residues 28–48; the sequence is FFIAQVVLRFFTLAFTGAAIA. At 49 to 77 the chain is on the extracellular side; the sequence is VMVTAKETVEVFSISFTVRYSYLSAFKFL. Residues 78–98 form a helical membrane-spanning segment; sequence VGADAVVCGFSMLSLIFVSIF. Topologically, residues 99 to 113 are cytoplasmic; sequence NKGKSNHYFFLYFHD. A helical transmembrane segment spans residues 114-134; sequence LILMVLSMSACAAATAVGYVG. At 135–156 the chain is on the extracellular side; it reads RYGQDKAAWMAVCGNVKMFCDK. The chain crosses the membrane as a helical span at residues 157–177; the sequence is ALASILLSLIGFICLFLLTIM. The Cytoplasmic segment spans residues 178-189; the sequence is AARNLRVSGHLI.

The protein belongs to the Casparian strip membrane proteins (CASP) family. As to quaternary structure, homodimer and heterodimers.

It localises to the cell membrane. This Vitis vinifera (Grape) protein is CASP-like protein 1F2.